A 383-amino-acid polypeptide reads, in one-letter code: Hippurate hydrolase (383 aa).

This sequence belongs to the peptidase M20 family.

The enzyme catalyses N-benzoylglycine + H2O = benzoate + glycine. Its function is as follows. Cleaves hippuric acid into benzoic acid and glycine. The protein is Hippurate hydrolase of Campylobacter jejuni subsp. jejuni serotype O:2 (strain ATCC 700819 / NCTC 11168).